Here is a 362-residue protein sequence, read N- to C-terminus: Phosphoserine aminotransferase (362 aa).

Positions 9 and 42 each coordinate L-glutamate. Pyridoxal 5'-phosphate-binding positions include 76–77, Trp-102, Thr-153, Asp-174, and Gln-197; that span reads GR. Residue Lys-198 is modified to N6-(pyridoxal phosphate)lysine. Position 239–240 (239–240) interacts with pyridoxal 5'-phosphate; that stretch reads NT.

This sequence belongs to the class-V pyridoxal-phosphate-dependent aminotransferase family. SerC subfamily. In terms of assembly, homodimer. Requires pyridoxal 5'-phosphate as cofactor.

It localises to the cytoplasm. It carries out the reaction O-phospho-L-serine + 2-oxoglutarate = 3-phosphooxypyruvate + L-glutamate. The enzyme catalyses 4-(phosphooxy)-L-threonine + 2-oxoglutarate = (R)-3-hydroxy-2-oxo-4-phosphooxybutanoate + L-glutamate. It participates in amino-acid biosynthesis; L-serine biosynthesis; L-serine from 3-phospho-D-glycerate: step 2/3. It functions in the pathway cofactor biosynthesis; pyridoxine 5'-phosphate biosynthesis; pyridoxine 5'-phosphate from D-erythrose 4-phosphate: step 3/5. Functionally, catalyzes the reversible conversion of 3-phosphohydroxypyruvate to phosphoserine and of 3-hydroxy-2-oxo-4-phosphonooxybutanoate to phosphohydroxythreonine. The polypeptide is Phosphoserine aminotransferase (Enterobacter sp. (strain 638)).